Reading from the N-terminus, the 452-residue chain is 23S rRNA (uracil(1939)-C(5))-methyltransferase RlmD (452 aa).

Residues 1–23 (MSRKKSNGGLRFQPAGGNRATQI) are disordered. The TRAM domain occupies 22 to 80 (QIPVGKKQRLLIERVAGDGRGIAFIEGRTWFVSGALGGEEVEARVLGARGKVVEARLER). [4Fe-4S] cluster-binding residues include Cys93, Cys99, Cys102, and Cys181. 6 residues coordinate S-adenosyl-L-methionine: Gln285, Phe314, Asn319, Glu335, Asp362, and Asp383. Cys409 acts as the Nucleophile in catalysis.

Belongs to the class I-like SAM-binding methyltransferase superfamily. RNA M5U methyltransferase family. RlmD subfamily.

It catalyses the reaction uridine(1939) in 23S rRNA + S-adenosyl-L-methionine = 5-methyluridine(1939) in 23S rRNA + S-adenosyl-L-homocysteine + H(+). Its function is as follows. Catalyzes the formation of 5-methyl-uridine at position 1939 (m5U1939) in 23S rRNA. This is 23S rRNA (uracil(1939)-C(5))-methyltransferase RlmD from Pseudomonas entomophila (strain L48).